A 356-amino-acid polypeptide reads, in one-letter code: DNA polymerase IV (356 aa).

The 188-residue stretch at Met-1–Gly-188 folds into the UmuC domain. Mg(2+) contacts are provided by Asp-11 and Asp-106. Glu-107 is a catalytic residue.

The protein belongs to the DNA polymerase type-Y family. Monomer. Requires Mg(2+) as cofactor.

The protein localises to the cytoplasm. It catalyses the reaction DNA(n) + a 2'-deoxyribonucleoside 5'-triphosphate = DNA(n+1) + diphosphate. Poorly processive, error-prone DNA polymerase involved in untargeted mutagenesis. Copies undamaged DNA at stalled replication forks, which arise in vivo from mismatched or misaligned primer ends. These misaligned primers can be extended by PolIV. Exhibits no 3'-5' exonuclease (proofreading) activity. May be involved in translesional synthesis, in conjunction with the beta clamp from PolIII. The polypeptide is DNA polymerase IV (Listeria monocytogenes serotype 4b (strain F2365)).